We begin with the raw amino-acid sequence, 330 residues long: Aspartate--ammonia ligase (330 aa).

It belongs to the class-II aminoacyl-tRNA synthetase family. AsnA subfamily.

It is found in the cytoplasm. It catalyses the reaction L-aspartate + NH4(+) + ATP = L-asparagine + AMP + diphosphate + H(+). Its pathway is amino-acid biosynthesis; L-asparagine biosynthesis; L-asparagine from L-aspartate (ammonia route): step 1/1. The chain is Aspartate--ammonia ligase from Klebsiella pneumoniae subsp. pneumoniae (strain ATCC 700721 / MGH 78578).